Here is a 139-residue protein sequence, read N- to C-terminus: Small ribosomal subunit protein bS16 (139 aa).

A disordered region spans residues 84–139; it reads KGEPAPAPLLQPAEKAARPSFEAIGGEDEGKGEAITQKKKADKKDEAAAESSASEA.

Belongs to the bacterial ribosomal protein bS16 family.

This is Small ribosomal subunit protein bS16 from Streptomyces coelicolor (strain ATCC BAA-471 / A3(2) / M145).